Here is a 944-residue protein sequence, read N- to C-terminus: Nonsense-mediated mRNA decay factor SMG8 (944 aa).

Disordered regions lie at residues 559-601 (LNNG…SNCC) and 629-654 (ASSEQLLNSEQNTTSSGTSSADTDNE). The segment covering 568-589 (QDEDAEEDEAEEEEGQEQEQPT) has biased composition (acidic residues). Residues 629–640 (ASSEQLLNSEQN) show a composition bias toward polar residues. Residues 641-650 (TTSSGTSSAD) show a composition bias toward low complexity.

The protein belongs to the SMG8 family.

In terms of biological role, involved in nonsense-mediated decay (NMD) of mRNAs containing premature stop codons. Probable component of kinase complex containing nonC and recruited to stalled ribosomes. This chain is Nonsense-mediated mRNA decay factor SMG8, found in Drosophila melanogaster (Fruit fly).